Consider the following 297-residue polypeptide: Small ribosomal subunit biogenesis GTPase RsgA (297 aa).

The region spanning isoleucine 65–isoleucine 223 is the CP-type G domain. GTP-binding positions include serine 114–aspartate 117 and glycine 166–threonine 174. Residues cysteine 247, cysteine 252, histidine 254, and cysteine 260 each contribute to the Zn(2+) site.

It belongs to the TRAFAC class YlqF/YawG GTPase family. RsgA subfamily. As to quaternary structure, monomer. Associates with 30S ribosomal subunit, binds 16S rRNA. It depends on Zn(2+) as a cofactor.

The protein localises to the cytoplasm. One of several proteins that assist in the late maturation steps of the functional core of the 30S ribosomal subunit. Helps release RbfA from mature subunits. May play a role in the assembly of ribosomal proteins into the subunit. Circularly permuted GTPase that catalyzes slow GTP hydrolysis, GTPase activity is stimulated by the 30S ribosomal subunit. The protein is Small ribosomal subunit biogenesis GTPase RsgA of Lactobacillus johnsonii (strain CNCM I-12250 / La1 / NCC 533).